The primary structure comprises 251 residues: MHKVVLLRHGESLWNMENRFTGWTDVDLSPKGIEEARESGKTLKAEGYTFDCAFTSVLKRAIRTLWIVLDELDRMWIPVYKSWRLNERHYGALQGLNKAETAKKYGEEQVKIWRRSVDVRPPALEKDDPRYPGFDPRYADLSEEEIPLTENLIDTINRVIPYWESTIAPTIKSGKKVLIVAHGNSLRGLVKYLDNLSKQEIMELNIPTGIPLVYELDDDLKPIRHYYLADEEKVKEKKELVENQGKIQGNS.

Substrate-binding positions include 8–15 (RHGESLWN), 21–22 (TG), R60, 87–90 (ERHY), K98, 114–115 (RR), and 183–184 (GN). H9 (tele-phosphohistidine intermediate) is an active-site residue. E87 (proton donor/acceptor) is an active-site residue.

The protein belongs to the phosphoglycerate mutase family. BPG-dependent PGAM subfamily.

It catalyses the reaction (2R)-2-phosphoglycerate = (2R)-3-phosphoglycerate. It participates in carbohydrate degradation; glycolysis; pyruvate from D-glyceraldehyde 3-phosphate: step 3/5. Catalyzes the interconversion of 2-phosphoglycerate and 3-phosphoglycerate. The chain is 2,3-bisphosphoglycerate-dependent phosphoglycerate mutase from Thermoanaerobacter pseudethanolicus (strain ATCC 33223 / 39E) (Clostridium thermohydrosulfuricum).